A 112-amino-acid chain; its full sequence is MLLRTVILFALAAVAEIGGAWLIWQAVREGRPFWWAGLGVMALGAYGFIATLQADASFGRILAAYGGVFVAGSLLWGTVVDGYRPDRWDVIGAVVCLVGVAVIMAAPRGQGA.

Transmembrane regions (helical) follow at residues 6 to 26 (VILFALAAVAEIGGAWLIWQA), 32 to 52 (PFWWAGLGVMALGAYGFIATL), 61 to 81 (ILAAYGGVFVAGSLLWGTVVD), and 87 to 107 (RWDVIGAVVCLVGVAVIMAAP).

The protein belongs to the UPF0060 family.

It is found in the cell membrane. This is UPF0060 membrane protein CMS0846 from Clavibacter sepedonicus (Clavibacter michiganensis subsp. sepedonicus).